Consider the following 104-residue polypeptide: Cytochrome c-551 (104 aa).

The first 22 residues, 1–22 (MKKILIPMLALGGALAMQPALA), serve as a signal peptide directing secretion. Heme c is bound by residues cysteine 34, cysteine 37, histidine 38, and methionine 83.

In terms of processing, binds 1 heme c group covalently per subunit.

The protein localises to the periplasm. Functionally, electron donor for cytochrome cd1 in nitrite and nitrate respiration. This is Cytochrome c-551 (nirM) from Stutzerimonas stutzeri (Pseudomonas stutzeri).